Reading from the N-terminus, the 105-residue chain is Large ribosomal subunit protein bL21 (105 aa).

It belongs to the bacterial ribosomal protein bL21 family. In terms of assembly, part of the 50S ribosomal subunit. Contacts protein L20.

This protein binds to 23S rRNA in the presence of protein L20. This chain is Large ribosomal subunit protein bL21, found in Rickettsia canadensis (strain McKiel).